A 38-amino-acid chain; its full sequence is Plastocyanin (38 aa).

The Plastocyanin-like domain maps to 1-38 (AQTVEVKMGADGGLLVFEPAKAGPHNVVFDEDNIPPGV). Cu cation is bound at residue His-25.

It belongs to the plastocyanin family. Cu(2+) serves as cofactor.

Its subcellular location is the plastid. It localises to the chloroplast thylakoid membrane. Its function is as follows. Participates in electron transfer between P700 and the cytochrome b6-f complex in photosystem I. This chain is Plastocyanin (PETE), found in Thalassiosira oceanica (Marine diatom).